A 283-amino-acid polypeptide reads, in one-letter code: Pantothenate synthetase (283 aa).

An ATP-binding site is contributed by 30–37 (MGALHEGH). Histidine 37 functions as the Proton donor in the catalytic mechanism. Glutamine 61 serves as a coordination point for (R)-pantoate. Glutamine 61 contacts beta-alanine. Residue 147 to 150 (GMKD) participates in ATP binding. Residue glutamine 153 participates in (R)-pantoate binding. ATP-binding positions include valine 176 and 184 to 187 (LSSR).

The protein belongs to the pantothenate synthetase family. Homodimer.

Its subcellular location is the cytoplasm. It catalyses the reaction (R)-pantoate + beta-alanine + ATP = (R)-pantothenate + AMP + diphosphate + H(+). The protein operates within cofactor biosynthesis; (R)-pantothenate biosynthesis; (R)-pantothenate from (R)-pantoate and beta-alanine: step 1/1. In terms of biological role, catalyzes the condensation of pantoate with beta-alanine in an ATP-dependent reaction via a pantoyl-adenylate intermediate. The polypeptide is Pantothenate synthetase (Endomicrobium trichonymphae).